A 395-amino-acid chain; its full sequence is Tyrosine--tRNA ligase (395 aa).

The 'HIGH' region signature appears at 42 to 51 (PTAPDIHLGH). Residues 226–230 (KMSKS) carry the 'KMSKS' region motif. Lys229 is a binding site for ATP. Residues 334–394 (IAISNLLKDA…GKRKFARITL (61 aa)) enclose the S4 RNA-binding domain.

The protein belongs to the class-I aminoacyl-tRNA synthetase family. TyrS type 2 subfamily. In terms of assembly, homodimer.

It is found in the cytoplasm. It carries out the reaction tRNA(Tyr) + L-tyrosine + ATP = L-tyrosyl-tRNA(Tyr) + AMP + diphosphate + H(+). In terms of biological role, catalyzes the attachment of tyrosine to tRNA(Tyr) in a two-step reaction: tyrosine is first activated by ATP to form Tyr-AMP and then transferred to the acceptor end of tRNA(Tyr). The protein is Tyrosine--tRNA ligase of Photobacterium profundum (strain SS9).